The sequence spans 195 residues: Probable chorismate pyruvate-lyase (195 aa).

Arg79, Leu117, and Glu180 together coordinate substrate.

Belongs to the UbiC family.

Its subcellular location is the cytoplasm. The catalysed reaction is chorismate = 4-hydroxybenzoate + pyruvate. The protein operates within cofactor biosynthesis; ubiquinone biosynthesis. Removes the pyruvyl group from chorismate, with concomitant aromatization of the ring, to provide 4-hydroxybenzoate (4HB) for the ubiquinone pathway. This chain is Probable chorismate pyruvate-lyase, found in Ralstonia nicotianae (strain ATCC BAA-1114 / GMI1000) (Ralstonia solanacearum).